The sequence spans 647 residues: Glutamyl-tRNA(Gln) amidotransferase subunit B, mitochondrial (647 aa).

The disordered stretch occupies residues Q87–T106. The segment covering A90–K100 has biased composition (basic residues).

It belongs to the GatB/GatE family. GatB subfamily. Subunit of the heterotrimeric GatCAB amidotransferase (AdT) complex, composed of A, B and C subunits.

It is found in the mitochondrion. The enzyme catalyses L-glutamyl-tRNA(Gln) + L-glutamine + ATP + H2O = L-glutaminyl-tRNA(Gln) + L-glutamate + ADP + phosphate + H(+). Functionally, allows the formation of correctly charged Gln-tRNA(Gln) through the transamidation of misacylated Glu-tRNA(Gln) in the mitochondria. The reaction takes place in the presence of glutamine and ATP through an activated gamma-phospho-Glu-tRNA(Gln). The polypeptide is Glutamyl-tRNA(Gln) amidotransferase subunit B, mitochondrial (Neurospora crassa (strain ATCC 24698 / 74-OR23-1A / CBS 708.71 / DSM 1257 / FGSC 987)).